Reading from the N-terminus, the 750-residue chain is Xylosyl- and glucuronyltransferase LARGE2s (750 aa).

Residues 1–10 (MLCPCRGKLK) lie on the Cytoplasmic side of the membrane. Residues 11–31 (LLVVSLSFVILFTWLYLLVGN) traverse the membrane as a helical; Signal-anchor for type II membrane protein segment. At 32–750 (SENGRSLLLS…LKYLTAQRNI (719 aa)) the chain is on the lumenal side. Asn116, Asn142, and Asn228 each carry an N-linked (GlcNAc...) asparagine glycan. Residues 132 to 407 (LHVACVCAGH…FLEYDGNLLR (276 aa)) are xylosyltransferase activity. Positions 236 and 238 each coordinate Mn(2+). Residue Asn266 is glycosylated (N-linked (GlcNAc...) asparagine). The tract at residues 408–750 (RELFGCPSQA…LKYLTAQRNI (343 aa)) is glucuronyltransferase activity. Mn(2+) contacts are provided by Asp557 and Asp559.

The protein in the C-terminal section; belongs to the glycosyltransferase 49 family. This sequence in the N-terminal section; belongs to the glycosyltransferase 8 family. Requires Mn(2+) as cofactor.

It is found in the golgi apparatus membrane. It catalyses the reaction 3-O-[beta-D-GlcA-(1-&gt;3)-beta-D-Xyl-(1-&gt;4)-Rib-ol-P-Rib-ol-P-3-beta-D-GalNAc-(1-&gt;3)-beta-D-GlcNAc-(1-&gt;4)-(O-6-P-alpha-D-Man)]-Thr-[protein] + UDP-alpha-D-xylose = 3-O-[alpha-D-Xyl-(1-&gt;3)-beta-D-GlcA-(1-&gt;4)-beta-D-Xyl-(1-&gt;4)-Rib-ol-P-Rib-ol-P-3-beta-D-GalNAc-(1-&gt;3)-beta-D-GlcNAc-(1-&gt;4)-(O-6-P-alpha-D-Man)]-Thr-[protein] + UDP + H(+). It carries out the reaction 3-O-{(1-&gt;[3)-alpha-D-Xyl-(1-&gt;3)-beta-D-GlcA-(1-&gt;](n)-4)-beta-D-Xyl-(1-&gt;4)-Rib-ol-P-Rib-ol-P-3-beta-D-GalNAc-(1-&gt;3)-beta-D-GlcNAc-(1-&gt;4)-O-6-P-alpha-D-Man}-L-Thr-[protein] + UDP-alpha-D-glucuronate = 3-O-{beta-D-GlcA-(1-&gt;[3)-alpha-D-Xyl-(1-&gt;3)-beta-D-GlcA-(1-&gt;](n)-4)-beta-D-Xyl-(1-&gt;4)-Rib-ol-P-Rib-ol-P-3-beta-D-GalNAc-(1-&gt;3)-beta-D-GlcNAc-(1-&gt;4)-O-6-P-alpha-D-Man}-L-Thr-[protein] + UDP + H(+). The enzyme catalyses 3-O-{beta-D-GlcA-(1-&gt;[3)-alpha-D-Xyl-(1-&gt;3)-beta-D-GlcA-(1-&gt;](n)-4)-beta-D-Xyl-(1-&gt;4)-Rib-ol-P-Rib-ol-P-3-beta-D-GalNAc-(1-&gt;3)-beta-D-GlcNAc-(1-&gt;4)-O-6-P-alpha-D-Man}-L-Thr-[protein] + UDP-alpha-D-xylose = 3-O-{(1-&gt;[3)-alpha-D-Xyl-(1-&gt;3)-beta-D-GlcA-(1-&gt;](n+1)-4)-beta-D-Xyl-(1-&gt;4)-Rib-ol-P-Rib-ol-P-3-beta-D-GalNAc-(1-&gt;3)-beta-D-GlcNAc-(1-&gt;4)-O-6-P-alpha-D-Man}-L-Thr-[protein] + UDP + H(+). It participates in protein modification; protein glycosylation. In terms of biological role, bifunctional glycosyltransferase with both alpha-1,3-xylosyltransferase and beta-1,3-glucuronyltransferase activities involved in the maturation of alpha-dystroglycan (DAG1) by glycosylation leading to DAG1 binding to laminin G-like domain-containing extracellular proteins with high affinity and in a phosphorylated-O-mannosyl trisaccharide dependent manner. Elongates the glucuronyl-beta-1,4-xylose-beta disaccharide primer structure by adding repeating units [-3-Xylose-alpha-1,3-GlcA-beta-1-] to produce a heteropolysaccharide. Supports the maturation of DAG1 more effectively than LARGE1. In addition, can modify both heparan sulfate (HS)- and chondroitin/dermatan sulfate (CS/DS)-proteoglycans (PGs), namely GPC4, with a glycosaminoglycan (GAG)-like polysaccharide composed of xylose and glucuronic acid to confer laminin binding. The polypeptide is Xylosyl- and glucuronyltransferase LARGE2s (Danio rerio (Zebrafish)).